A 314-amino-acid polypeptide reads, in one-letter code: (+)-neomenthol dehydrogenase (314 aa).

Val-13–Val-36 is a binding site for NADP(+). Ser-183 contributes to the substrate binding site. The active-site Proton acceptor is Tyr-239.

Belongs to the short-chain dehydrogenases/reductases (SDR) family. Monomer. Expressed in flowers and red fruit tissues. Not detected in leaves, stems, roots or green fruits.

The enzyme catalyses (+)-neomenthol + NADP(+) = (1R,4S)-menthone + NADPH + H(+). In terms of biological role, involved in basal resistance against pathogens. In Capsicum annuum (Capsicum pepper), this protein is (+)-neomenthol dehydrogenase (MNR1).